Consider the following 371-residue polypeptide: Succinyl-diaminopimelate desuccinylase (371 aa).

Residue H68 participates in Zn(2+) binding. The active site involves D70. D99 is a binding site for Zn(2+). E130 serves as the catalytic Proton acceptor. Residues E131, E159, and H344 each contribute to the Zn(2+) site.

This sequence belongs to the peptidase M20A family. DapE subfamily. Homodimer. Requires Zn(2+) as cofactor. The cofactor is Co(2+).

The catalysed reaction is N-succinyl-(2S,6S)-2,6-diaminopimelate + H2O = (2S,6S)-2,6-diaminopimelate + succinate. The protein operates within amino-acid biosynthesis; L-lysine biosynthesis via DAP pathway; LL-2,6-diaminopimelate from (S)-tetrahydrodipicolinate (succinylase route): step 3/3. Catalyzes the hydrolysis of N-succinyl-L,L-diaminopimelic acid (SDAP), forming succinate and LL-2,6-diaminopimelate (DAP), an intermediate involved in the bacterial biosynthesis of lysine and meso-diaminopimelic acid, an essential component of bacterial cell walls. This is Succinyl-diaminopimelate desuccinylase from Acidiphilium cryptum (strain JF-5).